The primary structure comprises 570 residues: Sulfite reductase [NADPH] hemoprotein beta-component (570 aa).

Residues cysteine 434, cysteine 440, cysteine 479, and cysteine 483 each contribute to the [4Fe-4S] cluster site. Cysteine 483 provides a ligand contact to siroheme.

Belongs to the nitrite and sulfite reductase 4Fe-4S domain family. In terms of assembly, alpha(8)-beta(8). The alpha component is a flavoprotein, the beta component is a hemoprotein. Siroheme serves as cofactor. It depends on [4Fe-4S] cluster as a cofactor.

It catalyses the reaction hydrogen sulfide + 3 NADP(+) + 3 H2O = sulfite + 3 NADPH + 4 H(+). Its pathway is sulfur metabolism; hydrogen sulfide biosynthesis; hydrogen sulfide from sulfite (NADPH route): step 1/1. Functionally, component of the sulfite reductase complex that catalyzes the 6-electron reduction of sulfite to sulfide. This is one of several activities required for the biosynthesis of L-cysteine from sulfate. This Salmonella paratyphi B (strain ATCC BAA-1250 / SPB7) protein is Sulfite reductase [NADPH] hemoprotein beta-component.